The chain runs to 470 residues: 3-isopropylmalate dehydratase large subunit (470 aa).

Cysteine 351, cysteine 411, and cysteine 414 together coordinate [4Fe-4S] cluster.

Belongs to the aconitase/IPM isomerase family. LeuC type 1 subfamily. In terms of assembly, heterodimer of LeuC and LeuD. Requires [4Fe-4S] cluster as cofactor.

It carries out the reaction (2R,3S)-3-isopropylmalate = (2S)-2-isopropylmalate. It participates in amino-acid biosynthesis; L-leucine biosynthesis; L-leucine from 3-methyl-2-oxobutanoate: step 2/4. Functionally, catalyzes the isomerization between 2-isopropylmalate and 3-isopropylmalate, via the formation of 2-isopropylmaleate. This chain is 3-isopropylmalate dehydratase large subunit, found in Shewanella frigidimarina (strain NCIMB 400).